The sequence spans 287 residues: S-methyl-5'-thioadenosine phosphorylase (287 aa).

Residues Thr13 and Arg55–His56 contribute to the phosphate site. A substrate-binding site is contributed by Met186. Thr187 provides a ligand contact to phosphate. Substrate is bound at residue Asp210–Asp212.

It belongs to the PNP/MTAP phosphorylase family. MTAP subfamily. Homohexamer. Dimer of a homotrimer.

The catalysed reaction is S-methyl-5'-thioadenosine + phosphate = 5-(methylsulfanyl)-alpha-D-ribose 1-phosphate + adenine. It functions in the pathway amino-acid biosynthesis; L-methionine biosynthesis via salvage pathway; S-methyl-5-thio-alpha-D-ribose 1-phosphate from S-methyl-5'-thioadenosine (phosphorylase route): step 1/1. Catalyzes the reversible phosphorylation of S-methyl-5'-thioadenosine (MTA) to adenine and 5-methylthioribose-1-phosphate. Involved in the breakdown of MTA, a major by-product of polyamine biosynthesis. Responsible for the first step in the methionine salvage pathway after MTA has been generated from S-adenosylmethionine. Has broad substrate specificity with 6-aminopurine nucleosides as preferred substrates. The protein is S-methyl-5'-thioadenosine phosphorylase of Leptospira interrogans serogroup Icterohaemorrhagiae serovar copenhageni (strain Fiocruz L1-130).